The sequence spans 504 residues: ATP synthase subunit alpha, chloroplastic (504 aa).

Gly170–Thr177 contributes to the ATP binding site.

The protein belongs to the ATPase alpha/beta chains family. F-type ATPases have 2 components, CF(1) - the catalytic core - and CF(0) - the membrane proton channel. CF(1) has five subunits: alpha(3), beta(3), gamma(1), delta(1), epsilon(1). CF(0) has four main subunits: a, b, b' and c.

It is found in the plastid. Its subcellular location is the chloroplast thylakoid membrane. It catalyses the reaction ATP + H2O + 4 H(+)(in) = ADP + phosphate + 5 H(+)(out). Functionally, produces ATP from ADP in the presence of a proton gradient across the membrane. The alpha chain is a regulatory subunit. The chain is ATP synthase subunit alpha, chloroplastic from Porphyra purpurea (Red seaweed).